We begin with the raw amino-acid sequence, 84 residues long: Cell division topological specificity factor (84 aa).

Belongs to the MinE family.

Functionally, prevents the cell division inhibition by proteins MinC and MinD at internal division sites while permitting inhibition at polar sites. This ensures cell division at the proper site by restricting the formation of a division septum at the midpoint of the long axis of the cell. This Hydrogenovibrio crunogenus (strain DSM 25203 / XCL-2) (Thiomicrospira crunogena) protein is Cell division topological specificity factor.